A 162-amino-acid chain; its full sequence is Probable chemoreceptor glutamine deamidase CheD (162 aa).

The protein belongs to the CheD family.

It carries out the reaction L-glutaminyl-[protein] + H2O = L-glutamyl-[protein] + NH4(+). In terms of biological role, probably deamidates glutamine residues to glutamate on methyl-accepting chemotaxis receptors (MCPs), playing an important role in chemotaxis. This is Probable chemoreceptor glutamine deamidase CheD from Clostridium botulinum (strain Eklund 17B / Type B).